Here is a 351-residue protein sequence, read N- to C-terminus: Photosystem II D2 protein (351 aa).

The helical transmembrane segment at 39–59 threads the bilayer; it reads CAYLALGAWFTGTTFVSSWYT. Residue His-116 coordinates chlorophyll a. The chain crosses the membrane as a helical span at residues 123–139; sequence GFCLRQFEIARLVGLRP. Pheophytin a contacts are provided by Gln-128 and Asn-141. The helical transmembrane segment at 151–164 threads the bilayer; that stretch reads VFVSVFLLYPLGQA. His-196 lines the chlorophyll a pocket. The chain crosses the membrane as a helical span at residues 206–226; it reads GALLCAIHGATVENTLFEDGE. 2 residues coordinate a plastoquinone: His-213 and Phe-260. His-213 is a Fe cation binding site. Fe cation is bound at residue His-267. Residues 277-293 form a helical membrane-spanning segment; it reads GLWVSSIGIVGLALNLR.

This sequence belongs to the reaction center PufL/M/PsbA/D family. PSII is composed of 1 copy each of membrane proteins PsbA, PsbB, PsbC, PsbD, PsbE, PsbF, PsbH, PsbI, PsbJ, PsbK, PsbL, PsbM, PsbT, PsbY, PsbZ, Psb30/Ycf12, at least 3 peripheral proteins of the oxygen-evolving complex and a large number of cofactors. It forms dimeric complexes. The D1/D2 heterodimer binds P680, chlorophylls that are the primary electron donor of PSII, and subsequent electron acceptors. It shares a non-heme iron and each subunit binds pheophytin, quinone, additional chlorophylls, carotenoids and lipids. There is also a Cl(-1) ion associated with D1 and D2, which is required for oxygen evolution. The PSII complex binds additional chlorophylls, carotenoids and specific lipids. is required as a cofactor.

It is found in the plastid. The protein resides in the chloroplast thylakoid membrane. It carries out the reaction 2 a plastoquinone + 4 hnu + 2 H2O = 2 a plastoquinol + O2. Its function is as follows. Photosystem II (PSII) is a light-driven water:plastoquinone oxidoreductase that uses light energy to abstract electrons from H(2)O, generating O(2) and a proton gradient subsequently used for ATP formation. It consists of a core antenna complex that captures photons, and an electron transfer chain that converts photonic excitation into a charge separation. The D1/D2 (PsbA/PsbD) reaction center heterodimer binds P680, the primary electron donor of PSII as well as several subsequent electron acceptors. D2 is needed for assembly of a stable PSII complex. This chain is Photosystem II D2 protein, found in Cyanidium caldarium (Red alga).